Reading from the N-terminus, the 332-residue chain is Ferredoxin--NADP reductase (332 aa).

Positions 33, 41, 46, 86, 121, 282, and 325 each coordinate FAD.

It belongs to the ferredoxin--NADP reductase type 2 family. Homodimer. FAD is required as a cofactor.

It carries out the reaction 2 reduced [2Fe-2S]-[ferredoxin] + NADP(+) + H(+) = 2 oxidized [2Fe-2S]-[ferredoxin] + NADPH. This is Ferredoxin--NADP reductase from Metallosphaera sedula (strain ATCC 51363 / DSM 5348 / JCM 9185 / NBRC 15509 / TH2).